Here is a 760-residue protein sequence, read N- to C-terminus: Leucine-rich repeat extensin-like protein 3 (760 aa).

The signal sequence occupies residues 1–20; sequence MKKTIQILLFFFFLINLTNA. Asparagine 16 carries an N-linked (GlcNAc...) asparagine glycan. An LRR 1 repeat occupies 21 to 45; it reads LSISSDGGVLSDNEVRHIQRRQLLE. Residues asparagine 86 and asparagine 98 are each glycosylated (N-linked (GlcNAc...) asparagine). LRR repeat units lie at residues 113–137, 138–160, 161–185, 186–209, 211–232, 234–255, 256–279, 281–303, and 304–327; these read IRTV…LGLL, SDLA…RFNR, LKLL…VLQL, PSLK…LFSK, LDAI…FGDS, VSVI…LVEM, KNLN…IGRL, NVTV…VGEM, and VSVE…ICQL. Asparagine 281 is a glycosylation site (N-linked (GlcNAc...) asparagine). Residue asparagine 332 is glycosylated (N-linked (GlcNAc...) asparagine). 3 disordered regions span residues 389 to 502, 515 to 610, and 663 to 748; these read GRSV…PPPP, PPVY…YSPP, and PPPP…PVIG. Composition is skewed to pro residues over residues 394–415 and 423–502; these read PRPP…PPAP and LTSP…PPPP. The contains the Ser-Pro(4) repeats stretch occupies residues 409-758; sequence SPPPPAPIFS…VSYASPPPPP (350 aa). The segment covering 663–745 has biased composition (pro residues); that stretch reads PPPPVHYSSP…SPEYEGPLPP (83 aa).

As to quaternary structure, interacts with SH3P1. Post-translationally, hydroxylated on proline residues in the S-P-P-P-P repeat. O-glycosylated on hydroxyprolines. As to expression, expressed in roots, stems, leaves and flowers, mostly in vascular tissues.

It is found in the secreted. The protein localises to the cell wall. In terms of biological role, modulates cell morphogenesis by regulating cell wall formation and assembly, and/or growth polarization. This chain is Leucine-rich repeat extensin-like protein 3 (LRX3), found in Arabidopsis thaliana (Mouse-ear cress).